Consider the following 493-residue polypeptide: Sorting nexin-4 (493 aa).

Residues 1–77 form a disordered region; the sequence is MAVIDQDNFS…ILDCTVSDPH (77 aa). Residues 7–28 are compositionally biased toward polar residues; sequence DNFSNISWHSEQNAESAASTAQ. Residues 56–65 show a composition bias toward basic and acidic residues; it reads MEHDELDHSG. The region spanning 68 to 190 is the PX domain; that stretch reads ILDCTVSDPH…AFLESPDWNA (123 aa). A 1,2-diacyl-sn-glycero-3-phospho-(1D-myo-inositol-3-phosphate) contacts are provided by arginine 111, threonine 113, lysine 137, and arginine 156. 3 coiled-coil regions span residues 248–292, 338–363, and 405–442; these read EIKE…QKLI, SGTL…EYLN, and EQAR…QVSR.

This sequence belongs to the sorting nexin family.

It is found in the cytoplasm. The protein resides in the membrane. It localises to the endosome membrane. Its function is as follows. Sorting nexin, involved in the separation or division of vacuoles throughout the entire life cycle of the cells. Involved in retrieval of late-Golgi SNAREs from post-Golgi endosomes to the trans-Golgi network, for cytoplasm to vacuole transport (Cvt), and autophagy of large cargos including mitophagy, pexophagy and glycophagy. The chain is Sorting nexin-4 (vsp-5) from Neurospora crassa (strain ATCC 24698 / 74-OR23-1A / CBS 708.71 / DSM 1257 / FGSC 987).